Here is a 321-residue protein sequence, read N- to C-terminus: Glucokinase (321 aa).

Gly10–Thr15 is a binding site for ATP.

It belongs to the bacterial glucokinase family.

Its subcellular location is the cytoplasm. The catalysed reaction is D-glucose + ATP = D-glucose 6-phosphate + ADP + H(+). The sequence is that of Glucokinase from Marinobacter nauticus (strain ATCC 700491 / DSM 11845 / VT8) (Marinobacter aquaeolei).